The following is a 696-amino-acid chain: GPI mannosyltransferase 4 (696 aa).

6 helical membrane-spanning segments follow: residues 100–120, 125–142, 149–169, 185–205, 227–247, and 338–358; these read WQLELLGTYAYVVFPRLIYTL, NDYCLFRICRLYGLRFEI, SSWILLVFGTRTFSNSLEMAM, NTVVYKKEFLEEKYDKAESIS, AMSTICVAGVFNRPTFLLFGA, and YVHLMVNMPMLFNVLALASLG.

This sequence belongs to the glycosyltransferase 22 family. PIGZ subfamily.

The protein resides in the endoplasmic reticulum membrane. It functions in the pathway glycolipid biosynthesis; glycosylphosphatidylinositol-anchor biosynthesis. In terms of biological role, mannosyltransferase involved in glycosylphosphatidylinositol-anchor biosynthesis. Transfers a fourth mannose to some trimannosyl-GPIs during GPI precursor assembly. The polypeptide is GPI mannosyltransferase 4 (Drosophila melanogaster (Fruit fly)).